The sequence spans 132 residues: Small ribosomal subunit protein uS8 (132 aa).

The protein belongs to the universal ribosomal protein uS8 family. As to quaternary structure, part of the 30S ribosomal subunit. Contacts proteins S5 and S12.

In terms of biological role, one of the primary rRNA binding proteins, it binds directly to 16S rRNA central domain where it helps coordinate assembly of the platform of the 30S subunit. This is Small ribosomal subunit protein uS8 from Rhizobium meliloti (strain 1021) (Ensifer meliloti).